A 633-amino-acid chain; its full sequence is Probable potassium transport system protein Kup 2 (633 aa).

The next 11 membrane-spanning stretches (helical) occupy residues 59 to 79 (ISAI…ILIM), 110 to 130 (ILLV…LTPA), 145 to 165 (TALQ…LFLF), 173 to 193 (IGAL…AAGI), 219 to 239 (GFAS…AEAL), 256 to 276 (FGLV…LIIV), 287 to 307 (LLYP…ATVI), 345 to 365 (IYIP…VLGF), 374 to 394 (AYGV…FFVI), 402 to 422 (LLLS…FVSS), and 429 to 449 (EGGW…LTWV).

Belongs to the HAK/KUP transporter (TC 2.A.72) family.

The protein localises to the cell inner membrane. The enzyme catalyses K(+)(in) + H(+)(in) = K(+)(out) + H(+)(out). Transport of potassium into the cell. Likely operates as a K(+):H(+) symporter. This Cupriavidus necator (strain ATCC 17699 / DSM 428 / KCTC 22496 / NCIMB 10442 / H16 / Stanier 337) (Ralstonia eutropha) protein is Probable potassium transport system protein Kup 2.